We begin with the raw amino-acid sequence, 351 residues long: MKRNLLSSAIIVAIMSLGLTGCDDKKAETETLPPANSQPAAPAPEAKPTEAPVAKAEAKPETPAQPVVDEQAVFDEKMDVYIKCYNKLQIPVQRSLARYADWLKDFKQGPTGEERTVYGIYGISESNLAECEKGVKSAVALTPALQPIDGVAVSYIDAAVALGNTINEMDKYYTQENYKDDAFAKGKTLHQTFLKNLEAFEPVAESYHAAIQEINDKRQLAELKNIEEREGKTFHYYSLAVMISAKQINNLISQDKFDAEAAMKKVSELETLVAQAKEADKGGMNFSFINSAGQYQLEAKKYVRRIRDKVPYSDWDKEQLQDANSSWMVEDSFPRALREYNEMVDDYNSLR.

Residues 25 to 67 (KKAETETLPPANSQPAAPAPEAKPTEAPVAKAEAKPETPAQPV) are disordered. Low complexity predominate over residues 33-55 (PPANSQPAAPAPEAKPTEAPVAK).

This is an uncharacterized protein from Escherichia coli (strain K12).